Reading from the N-terminus, the 432-residue chain is Serine/threonine-protein phosphatase 2A activator 1 (432 aa).

The protein belongs to the PTPA-type PPIase family.

It localises to the cytoplasm. The protein localises to the nucleus. The enzyme catalyses [protein]-peptidylproline (omega=180) = [protein]-peptidylproline (omega=0). In terms of biological role, PPIases accelerate the folding of proteins. It catalyzes the cis-trans isomerization of proline imidic peptide bonds in oligopeptides. Acts as a regulatory subunit for PP2A-like phosphatases modulating their activity or substrate specificity, probably by inducing a conformational change in the catalytic subunit, a direct target of the PPIase. Can reactivate inactive phosphatase PP2A-phosphatase methylesterase complexes (PP2Ai) in presence of ATP and Mg(2+) by dissociating the inactive form from the complex. The sequence is that of Serine/threonine-protein phosphatase 2A activator 1 (rrd1) from Emericella nidulans (strain FGSC A4 / ATCC 38163 / CBS 112.46 / NRRL 194 / M139) (Aspergillus nidulans).